A 208-amino-acid chain; its full sequence is Small ribosomal subunit protein uS4 (208 aa).

The region spanning 98–158 (RRLDNIAYRL…EKSRKVACIN (61 aa)) is the S4 RNA-binding domain.

This sequence belongs to the universal ribosomal protein uS4 family. Part of the 30S ribosomal subunit. Contacts protein S5. The interaction surface between S4 and S5 is involved in control of translational fidelity.

One of the primary rRNA binding proteins, it binds directly to 16S rRNA where it nucleates assembly of the body of the 30S subunit. Its function is as follows. With S5 and S12 plays an important role in translational accuracy. This chain is Small ribosomal subunit protein uS4, found in Geotalea uraniireducens (strain Rf4) (Geobacter uraniireducens).